Consider the following 2555-residue polypeptide: Plipastatin synthase subunit C (2555 aa).

Residues 7 to 306 (IQDIYPLSFM…NTIPIRAQSD (300 aa)) form a condensation 1 region. An adenylation 1 region spans residues 491–894 (TYAELDMYAS…SIEGVREAAV (404 aa)). One can recognise a Carrier 1 domain in the interval 967–1042 (APRNVTEMKL…GLATVIREGT (76 aa)). Residue S1002 is modified to O-(pantetheine 4'-phosphoryl)serine. The interval 1054–1344 (KQETYPVSSA…NTLALRTRPE (291 aa)) is condensation 2. The interval 1532–1927 (TYEDLNSWAN…QIDGVKEAAV (396 aa)) is adenylation 2. Residues 2003 to 2077 (PPRNELEEQL…DLSPFIRKSE (75 aa)) enclose the Carrier 2 domain. S2038 is subject to O-(pantetheine 4'-phosphoryl)serine. Residues 2085-2548 (IQGDVPWTPV…SLTAEDLDSI (464 aa)) form an epimerization 3 region.

This sequence belongs to the ATP-dependent AMP-binding enzyme family. Requires pantetheine 4'-phosphate as cofactor.

Its function is as follows. This protein is a multifunctional enzyme, able to activate and polymerize the amino acids Glu and Ala/Val as part of the biosynthesis of the lipopeptide antibiotic plipastatin. The Ala/Val residue is further epimerized to the D-isomer form. The activation sites for these amino acids consist of individual domains. The polypeptide is Plipastatin synthase subunit C (ppsC) (Bacillus subtilis (strain 168)).